The primary structure comprises 437 residues: uncharacterized protein (437 aa).

3 stretches are compositionally biased toward basic residues: residues 1–29 (MDTP…RHRN), 81–91 (LRGRHPRVRRV), and 101–118 (RRRH…GRNR). 2 disordered regions span residues 1 to 31 (MDTP…RNDH) and 77 to 437 (EHVP…QGTR). Basic and acidic residues predominate over residues 119-132 (HAGDRRAPGVDSRL). The segment covering 133–142 (RQQHQHPRGR) has biased composition (basic residues). Residues 143-164 (HASDRVQDGAHPRRQRLREQPR) are compositionally biased toward basic and acidic residues. Residues 165–190 (HAGRPRRRQPPRRGRSRGTHRRHLRQ) show a composition bias toward basic residues. 2 stretches are compositionally biased toward basic and acidic residues: residues 198–209 (GPDEDQAREFRG) and 217–253 (HPPT…EAGR). Basic residues-rich tracts occupy residues 284–293 (TVHRGGRLRG) and 324–348 (PHSR…RVRH). Over residues 371–382 (DAAAYASVPAHA) the composition is skewed to low complexity.

This is an uncharacterized protein from Haloferax lucentense (strain DSM 14919 / JCM 9276 / NCIMB 13854 / Aa 2.2) (Haloferax alicantei).